A 416-amino-acid polypeptide reads, in one-letter code: Gamma-glutamyl phosphate reductase (416 aa).

Belongs to the gamma-glutamyl phosphate reductase family.

The protein localises to the cytoplasm. It carries out the reaction L-glutamate 5-semialdehyde + phosphate + NADP(+) = L-glutamyl 5-phosphate + NADPH + H(+). It functions in the pathway amino-acid biosynthesis; L-proline biosynthesis; L-glutamate 5-semialdehyde from L-glutamate: step 2/2. Functionally, catalyzes the NADPH-dependent reduction of L-glutamate 5-phosphate into L-glutamate 5-semialdehyde and phosphate. The product spontaneously undergoes cyclization to form 1-pyrroline-5-carboxylate. This chain is Gamma-glutamyl phosphate reductase, found in Leptospira interrogans serogroup Icterohaemorrhagiae serovar copenhageni (strain Fiocruz L1-130).